We begin with the raw amino-acid sequence, 193 residues long: Potassium-transporting ATPase KdpC subunit (193 aa).

A helical membrane pass occupies residues 7–27 (PLVVLFVILTAVTGLAYPAVM).

This sequence belongs to the KdpC family. In terms of assembly, the system is composed of three essential subunits: KdpA, KdpB and KdpC.

It localises to the cell inner membrane. Part of the high-affinity ATP-driven potassium transport (or Kdp) system, which catalyzes the hydrolysis of ATP coupled with the electrogenic transport of potassium into the cytoplasm. This subunit acts as a catalytic chaperone that increases the ATP-binding affinity of the ATP-hydrolyzing subunit KdpB by the formation of a transient KdpB/KdpC/ATP ternary complex. This is Potassium-transporting ATPase KdpC subunit from Burkholderia cenocepacia (strain ATCC BAA-245 / DSM 16553 / LMG 16656 / NCTC 13227 / J2315 / CF5610) (Burkholderia cepacia (strain J2315)).